Here is a 171-residue protein sequence, read N- to C-terminus: NADH-quinone oxidoreductase subunit B 2 (171 aa).

[4Fe-4S] cluster is bound by residues Cys-37, Cys-38, Cys-102, and Cys-132.

The protein belongs to the complex I 20 kDa subunit family. As to quaternary structure, NDH-1 is composed of 14 different subunits. Subunits NuoB, C, D, E, F, and G constitute the peripheral sector of the complex. The cofactor is [4Fe-4S] cluster.

The protein resides in the cell inner membrane. The catalysed reaction is a quinone + NADH + 5 H(+)(in) = a quinol + NAD(+) + 4 H(+)(out). Its function is as follows. NDH-1 shuttles electrons from NADH, via FMN and iron-sulfur (Fe-S) centers, to quinones in the respiratory chain. Couples the redox reaction to proton translocation (for every two electrons transferred, four hydrogen ions are translocated across the cytoplasmic membrane), and thus conserves the redox energy in a proton gradient. The protein is NADH-quinone oxidoreductase subunit B 2 of Chromobacterium violaceum (strain ATCC 12472 / DSM 30191 / JCM 1249 / CCUG 213 / NBRC 12614 / NCIMB 9131 / NCTC 9757 / MK).